A 124-amino-acid polypeptide reads, in one-letter code: Thioredoxin domain-containing protein C21C3.12c (124 aa).

The region spanning 37–124 (PWCPTVRAAL…ANKFSKFIDI (88 aa)) is the Thioredoxin domain. Cys-39 functions as the Nucleophile in the catalytic mechanism.

This sequence belongs to the thioredoxin family.

It localises to the cytoplasm. The protein resides in the nucleus. This chain is Thioredoxin domain-containing protein C21C3.12c, found in Schizosaccharomyces pombe (strain 972 / ATCC 24843) (Fission yeast).